We begin with the raw amino-acid sequence, 109 residues long: Transcription initiation factor IIA subunit 2 (109 aa).

Belongs to the TFIIA subunit 2 family. In terms of assembly, TFIIA is a heterodimer of the large unprocessed subunit 1 and a small subunit gamma. It was originally believed to be a heterotrimer of an alpha (p35), a beta (p19) and a gamma subunit (p12). Interacts with NCOA6 general coactivator. TFIIA forms a complex with TBP. Interacts with HSF1 (via transactivation domain). Part of TBP-based Pol II pre-initiation complex (PIC), in which Pol II core assembles with general transcription factors and other specific initiation factors including GTF2E1, GTF2E2, GTF2F1, GTF2F2, TCEA1, ERCC2, ERCC3, GTF2H2, GTF2H3, GTF2H4, GTF2H5, GTF2A1, GTF2A2, GTF2B and TBP; this large multi-subunit PIC complex mediates DNA unwinding and targets Pol II core to the transcription start site where the first phosphodiester bond forms.

The protein localises to the nucleus. Functionally, TFIIA is a component of the transcription machinery of RNA polymerase II and plays an important role in transcriptional activation. TFIIA in a complex with TBP mediates transcriptional activity. The sequence is that of Transcription initiation factor IIA subunit 2 (Gtf2a2) from Rattus norvegicus (Rat).